Consider the following 208-residue polypeptide: MSLGKFVSFEGTEGVGKTTAINGLCERLQAQGIEYVRTREPGGSPFAEQLRELLLDTRTQINDDTELLLMFAARSDHLAQVIMPALSAGKWVICDRFIDSTVAYQGYGRGFGNADMLHKIEALIAGFVPRLPDITLWLDLPVAEGMQRAGKRSVADRFEQQQLDFFDRVYQGFEAQQQAQPQRIQRIDAQGEVEQVADRIWQSVSQQL.

11-18 (GTEGVGKT) contributes to the ATP binding site.

The protein belongs to the thymidylate kinase family.

The enzyme catalyses dTMP + ATP = dTDP + ADP. Phosphorylation of dTMP to form dTDP in both de novo and salvage pathways of dTTP synthesis. The polypeptide is Thymidylate kinase (Psychrobacter sp. (strain PRwf-1)).